The following is a 515-amino-acid chain: Maturase K (515 aa).

Belongs to the intron maturase 2 family. MatK subfamily.

It is found in the plastid. It localises to the chloroplast. Usually encoded in the trnK tRNA gene intron. Probably assists in splicing its own and other chloroplast group II introns. The polypeptide is Maturase K (Pinus halepensis (Aleppo pine)).